The chain runs to 483 residues: Spermatogenesis-defective protein 39 homolog (483 aa).

The protein belongs to the SPE39 family. Interacts with vps33b. In terms of tissue distribution, high levels detected in liver and small intestine of larvae at 5 days post-fertilization.

It localises to the cytoplasm. It is found in the cytoplasmic vesicle. The protein resides in the early endosome. The protein localises to the recycling endosome. Its subcellular location is the late endosome. Proposed to be involved in endosomal maturation implicating in part vps33b. In epithelial cells, the vps33b:vipas39 complex may play a role in the apical rab11a-dependent recycling pathway and in the maintenance of the apical-basolateral polarity. May play a role in lysosomal trafficking, probably via association with the core HOPS complex in a discrete population of endosomes; the functions seems to be independent of vps33b. May play a role in vesicular trafficking during spermatogenesis. May be involved in direct or indirect transcriptional regulation of E-cadherin. In Danio rerio (Zebrafish), this protein is Spermatogenesis-defective protein 39 homolog (vipas39).